We begin with the raw amino-acid sequence, 380 residues long: Flap endonuclease 1 (380 aa).

An N-domain region spans residues 1–104; it reads MGIHGLAKLI…GELEKRGERR (104 aa). Residue D34 participates in Mg(2+) binding. Residues R47 and R70 each coordinate DNA. Mg(2+) contacts are provided by D86, E158, E160, D179, and D181. The tract at residues 122–253 is I-domain; it reads NIDKFSKRLV…KRAMDLIRQH (132 aa). E158 is a DNA binding site. The DNA site is built by G231 and D233. D233 is a Mg(2+) binding site. The segment at 336–344 is interaction with PCNA; the sequence is TQGRLDSFF. Residues 348-380 are disordered; that stretch reads GSLSSKRKEPEMKGSTKKKLKTGATAGKFKKGK.

Belongs to the XPG/RAD2 endonuclease family. FEN1 subfamily. In terms of assembly, interacts with PCNA. Three molecules of fen1 bind to one PCNA trimer with each molecule binding to one PCNA monomer. PCNA stimulates the nuclease activity without altering cleavage specificity. Mg(2+) is required as a cofactor. In terms of processing, phosphorylated. Phosphorylation upon DNA damage induces relocalization to the nuclear plasma.

It localises to the nucleus. The protein resides in the nucleolus. It is found in the nucleoplasm. The protein localises to the mitochondrion. Its function is as follows. Structure-specific nuclease with 5'-flap endonuclease and 5'-3' exonuclease activities involved in DNA replication and repair. During DNA replication, cleaves the 5'-overhanging flap structure that is generated by displacement synthesis when DNA polymerase encounters the 5'-end of a downstream Okazaki fragment. It enters the flap from the 5'-end and then tracks to cleave the flap base, leaving a nick for ligation. Also involved in the long patch base excision repair (LP-BER) pathway, by cleaving within the apurinic/apyrimidinic (AP) site-terminated flap. Acts as a genome stabilization factor that prevents flaps from equilibrating into structures that lead to duplications and deletions. Also possesses 5'-3' exonuclease activity on nicked or gapped double-stranded DNA, and exhibits RNase H activity. Also involved in replication and repair of rDNA and in repairing mitochondrial DNA. This Osmerus mordax (Rainbow smelt) protein is Flap endonuclease 1 (fen1).